The chain runs to 372 residues: 4-hydroxy-3-methylbut-2-en-1-yl diphosphate synthase (flavodoxin) (372 aa).

Positions 270, 273, 305, and 312 each coordinate [4Fe-4S] cluster.

It belongs to the IspG family. [4Fe-4S] cluster serves as cofactor.

It carries out the reaction (2E)-4-hydroxy-3-methylbut-2-enyl diphosphate + oxidized [flavodoxin] + H2O + 2 H(+) = 2-C-methyl-D-erythritol 2,4-cyclic diphosphate + reduced [flavodoxin]. Its pathway is isoprenoid biosynthesis; isopentenyl diphosphate biosynthesis via DXP pathway; isopentenyl diphosphate from 1-deoxy-D-xylulose 5-phosphate: step 5/6. Converts 2C-methyl-D-erythritol 2,4-cyclodiphosphate (ME-2,4cPP) into 1-hydroxy-2-methyl-2-(E)-butenyl 4-diphosphate. The chain is 4-hydroxy-3-methylbut-2-en-1-yl diphosphate synthase (flavodoxin) from Salmonella schwarzengrund (strain CVM19633).